The sequence spans 891 residues: Dynein axonemal intermediate chain 3 (891 aa).

The segment covering 1–17 (MAPKQKKKTSRGKKRLK) has biased composition (basic residues). The tract at residues 1–22 (MAPKQKKKTSRGKKRLKPVLAA) is disordered. 4 WD repeats span residues 395 to 435 (ESPD…DRIE), 477 to 533 (GHKK…PLTP), 670 to 709 (IHDG…GPLL), and 713 to 753 (CAPK…HEPA). Residues 818-861 (LEYVEQRKKIREQEKKEMELEMAKKKVKTYQKSKEQMQAELKMD) are a coiled coil.

Interacts with ACTR2; this interaction reduces binding of the Arp2/3 complex to the VCA domain of nucleation promoting factors. Part of the multisubunit axonemal dynein complex formed at least of two heavy chains and a number of intermediate and light chains. Found in a associated with the catalytic heavy chain DNAH2, the intermediate chain DNAI4, and the light chain DYNLT1.

The protein localises to the cytoplasm. Acts as a negative regulator of cell migration, invasion, and metastasis downstream of p53/TP53, through inhibition of Arp2/3 complex-mediated actin polymerization. Via its association with the multisubunit axonemal dynein complex, is potentially involved in the regulation of cilia function. May play a role in osteogenesis of dental tissue-derived mesenchymal stem cells. In Homo sapiens (Human), this protein is Dynein axonemal intermediate chain 3.